A 360-amino-acid polypeptide reads, in one-letter code: MNSPLRGIWLWLPLLLTWLTPEVSSSWWYMGATGGSSRVMCDNVPGLVSSQRQLCHRHPDVMRAIGLGVTEWTAECQYQFRQHRWNCNTLDRDHSLFGRVLLRSSRESAFVYAISSAGVVFAITRACSQGEVKSCSCDPKKMGSGKDSKGVFDWGGCSDNIDYGIKFARAFVDAKERKGKDARALMNLHNNRAGRKSVKRFLKQECKCHGVSGSCSLRTCWLAMADFRKTGDYLWRKYNGAIQVVMNQDGTGFTVANERFKKPTKNDLVYFENSPDYCIRDRETGSLGTAGRVCNLTSRGMDSCEVMCCGRGYDTSHVTRMIKCGCKFHWCCAVRCQDCLEALDVHTCKAPKNADWTTPT.

Positions 1 to 25 (MNSPLRGIWLWLPLLLTWLTPEVSS) are cleaved as a signal peptide. 11 disulfides stabilise this stretch: C76–C87, C127–C135, C137–C157, C206–C220, C208–C215, C278–C309, C294–C304, C308–C348, C324–C339, C326–C336, and C331–C332. S212 is lipidated: O-palmitoleoyl serine; by PORCN. N295 carries N-linked (GlcNAc...) asparagine glycosylation.

Belongs to the Wnt family. In terms of processing, palmitoleoylation is required for efficient binding to frizzled receptors. Depalmitoleoylation leads to Wnt signaling pathway inhibition.

It localises to the secreted. The protein resides in the extracellular space. It is found in the extracellular matrix. Ligand for members of the frizzled family of seven transmembrane receptors. Probable developmental protein. May be a signaling molecule which affects the development of discrete regions of tissues. Is likely to signal over only few cell diameters. The polypeptide is Protein Wnt-2 (WNT2) (Ateles geoffroyi (Black-handed spider monkey)).